Reading from the N-terminus, the 317-residue chain is Putative HTH-type transcriptional regulatory protein Mboo_0195 (317 aa).

One can recognise an HTH cro/C1-type domain in the interval 132 to 185; the sequence is LRELRERRSMSLGDLGQVLGVSRRTISKYESGMGTTLEVAIRIEEYFNTGVVES. The segment at residues 143-162 is a DNA-binding region (H-T-H motif); it reads LGDLGQVLGVSRRTISKYES.

The sequence is that of Putative HTH-type transcriptional regulatory protein Mboo_0195 from Methanoregula boonei (strain DSM 21154 / JCM 14090 / 6A8).